Reading from the N-terminus, the 324-residue chain is Alkanal monooxygenase beta chain (324 aa).

This sequence belongs to the bacterial luciferase oxidoreductase family. Heterodimer of an alpha and a beta chain.

It carries out the reaction a long-chain fatty aldehyde + FMNH2 + O2 = a long-chain fatty acid + hnu + FMN + H2O + 2 H(+). Its function is as follows. Light-emitting reaction in luminous bacteria. The specific role of the beta subunit is unknown, but it is absolutely required for bioluminescence activity. The chain is Alkanal monooxygenase beta chain (luxB) from Vibrio harveyi (Beneckea harveyi).